The sequence spans 227 residues: Ribonuclease HII (227 aa).

The region spanning 1–210 is the RNase H type-2 domain; the sequence is MKLAGIDEAG…LKKIEEKLAK (210 aa). Residues D7, E8, and D105 each coordinate a divalent metal cation.

This sequence belongs to the RNase HII family. It depends on Mn(2+) as a cofactor. The cofactor is Mg(2+).

It localises to the cytoplasm. It carries out the reaction Endonucleolytic cleavage to 5'-phosphomonoester.. Its function is as follows. Endonuclease that specifically degrades the RNA of RNA-DNA hybrids. The polypeptide is Ribonuclease HII (Thermococcus onnurineus (strain NA1)).